The sequence spans 287 residues: Genetic interactor of prohibitin 7, mitochondrial (287 aa).

A mitochondrion-targeting transit peptide spans 1 to 24; that stretch reads MVLSNVKIFRLKSHRAFRIGPMIK. A helical transmembrane segment spans residues 250-266; it reads SKAIISFVVFVSIYVWL.

Belongs to the GEP7 family.

The protein resides in the mitochondrion membrane. Its function is as follows. Involved in respiratory growth and required for cell survival in the absence of prohibitins or GEM1. The sequence is that of Genetic interactor of prohibitin 7, mitochondrial (GEP7) from Saccharomyces cerevisiae (strain ATCC 204508 / S288c) (Baker's yeast).